Consider the following 62-residue polypeptide: Mu-conotoxin Lt5d (62 aa).

The first 22 residues, 1–22 (MRCLPVFIILLLLIPSAPSVDA), serve as a signal peptide directing secretion. The propeptide occupies 23-48 (QPTTKDDVPLASLHDNAKRALQMFWN).

Belongs to the conotoxin T superfamily. In terms of processing, contains 2 disulfide bonds that can be either 'C1-C3, C2-C4' or 'C1-C4, C2-C3', since these disulfide connectivities have been observed for conotoxins with cysteine framework V (for examples, see AC P0DQQ7 and AC P81755). In terms of tissue distribution, expressed by the venom duct.

The protein localises to the secreted. Mu-conotoxins block voltage-gated sodium channels (Nav). This toxin inhibits tetrodotoxin(TTX)-sensitive sodium channels, but does not affect TTX-resistant sodium channels. Reduces the amplitude of currents without changing the activation and inactivation kinetics of currents. This chain is Mu-conotoxin Lt5d, found in Conus litteratus (Lettered cone).